Here is a 355-residue protein sequence, read N- to C-terminus: Phytoene synthase (355 aa).

The protein belongs to the phytoene/squalene synthase family. It depends on ATP as a cofactor. Mn(2+) is required as a cofactor. Mg(2+) serves as cofactor.

It participates in carotenoid biosynthesis; phytoene biosynthesis. In terms of biological role, involved in the biosynthesis of carotenoids. Catalyzes the condensation of two molecules of geranylgeranyl diphosphate (GGPP) to give prephytoene diphosphate (PPPP) and the subsequent rearrangement of the cyclopropylcarbinyl intermediate to yield phytoene. This chain is Phytoene synthase (crtB), found in Cereibacter sphaeroides (strain ATCC 17023 / DSM 158 / JCM 6121 / CCUG 31486 / LMG 2827 / NBRC 12203 / NCIMB 8253 / ATH 2.4.1.) (Rhodobacter sphaeroides).